Here is a 403-residue protein sequence, read N- to C-terminus: Acetylornithine aminotransferase (403 aa).

Pyridoxal 5'-phosphate contacts are provided by residues 107–108 (GA) and F140. Position 143 (R143) interacts with N(2)-acetyl-L-ornithine. 225-228 (DEVQ) contacts pyridoxal 5'-phosphate. N6-(pyridoxal phosphate)lysine is present on K254. S282 contacts N(2)-acetyl-L-ornithine. Pyridoxal 5'-phosphate is bound at residue T283.

It belongs to the class-III pyridoxal-phosphate-dependent aminotransferase family. ArgD subfamily. As to quaternary structure, homodimer. The cofactor is pyridoxal 5'-phosphate.

It localises to the cytoplasm. It carries out the reaction N(2)-acetyl-L-ornithine + 2-oxoglutarate = N-acetyl-L-glutamate 5-semialdehyde + L-glutamate. The protein operates within amino-acid biosynthesis; L-arginine biosynthesis; N(2)-acetyl-L-ornithine from L-glutamate: step 4/4. The chain is Acetylornithine aminotransferase from Vibrio vulnificus (strain YJ016).